A 499-amino-acid polypeptide reads, in one-letter code: Lysine--tRNA ligase (499 aa).

Mg(2+) is bound by residues Glu408 and Glu415.

Belongs to the class-II aminoacyl-tRNA synthetase family. Homodimer. Mg(2+) is required as a cofactor.

It localises to the cytoplasm. The enzyme catalyses tRNA(Lys) + L-lysine + ATP = L-lysyl-tRNA(Lys) + AMP + diphosphate. The sequence is that of Lysine--tRNA ligase from Bacillus thuringiensis (strain Al Hakam).